Reading from the N-terminus, the 197-residue chain is Putative NADH dehydrogenase/NAD(P)H nitroreductase Plav_3612 (197 aa).

The protein belongs to the nitroreductase family. HadB/RutE subfamily. FMN serves as cofactor.

The protein is Putative NADH dehydrogenase/NAD(P)H nitroreductase Plav_3612 of Parvibaculum lavamentivorans (strain DS-1 / DSM 13023 / NCIMB 13966).